The primary structure comprises 1192 residues: Protein WWC2 (1192 aa).

WW domains follow at residues 10-43 (LPLP…DPRD) and 57-90 (DELP…DPRK). 2 coiled-coil regions span residues 121-194 (KEQR…YKEQ) and 224-256 (ELKS…FHLD). Ser-286 is subject to Phosphoserine. The stretch at 302 to 421 (LAEKVRLSLQ…KLEETTKLTT (120 aa)) forms a coiled coil. A disordered region spans residues 441–462 (SSLGSLASSRGSLNTSSRGSLN). One can recognise a C2 domain in the interval 698–821 (ETAQVQIGLR…FSSEVFTLWY (124 aa)). Positions 859 to 887 (ALLARTSAELLAVEQELAQEEEEESGQEE) form a coiled coil. Disordered stretches follow at residues 873-895 (QELA…DGDW) and 911-991 (EAEV…SRQH). The span at 875–885 (LAQEEEEESGQ) shows a compositional bias: acidic residues. The segment covering 923 to 933 (TEDLSSCTSVP) has biased composition (polar residues). Over residues 938-951 (DGNRKESNCAKDLR) the composition is skewed to basic and acidic residues. The residue at position 1004 (Thr-1004) is a Phosphothreonine. Ser-1022 carries the phosphoserine modification. Positions 1031 to 1050 (SLFVRNSTERRSLRVKRTVC) are interaction with PRKCZ. A coiled-coil region spans residues 1068-1144 (DLELDLQASL…EQKQGLNAEK (77 aa)). The segment covering 1124 to 1137 (QAEKQAEQSKEEQK) has biased composition (basic and acidic residues). The disordered stretch occupies residues 1124 to 1143 (QAEKQAEQSKEEQKQGLNAE).

The protein belongs to the WWC family. As to quaternary structure, forms homodimers and heterodimers with WWC1 and WWC3. Interacts with DLC1 and PRKCZ. Interacts (via WW domains) with LATS1 and LATS2.

The protein resides in the cytoplasm. It is found in the cytosol. Functionally, regulator of the Hippo signaling pathway, also known as the Salvador-Warts-Hippo (SWH) pathway. Enhances phosphorylation of LATS1 and YAP1 and negatively regulates cell proliferation and organ growth due to a suppression of the transcriptional activity of YAP1, the major effector of the Hippo pathway. In Homo sapiens (Human), this protein is Protein WWC2.